Here is a 418-residue protein sequence, read N- to C-terminus: Protease LasA (418 aa).

An N-terminal signal peptide occupies residues 1–31 (MQHKRSRALASPRSPFLFALLALAVGGTANA). Positions 32 to 236 (HDDGLPAFRY…ARQLQAKAAL (205 aa)) are excised as a propeptide. Positions 259 and 272 each coordinate Zn(2+). A disulfide bridge links Cys301 with Cys347. Residues His317 and His356 each act as proton donor/acceptor in the active site. Zn(2+) is bound at residue His358. A disulfide bond links Cys391 and Cys406.

This sequence belongs to the peptidase M23A family. Requires Zn(2+) as cofactor.

The protein resides in the secreted. Functionally, involved in proteolysis and elastolysis (degradation of the host protein elastin). Has staphylolytic activity (degrades pentaglycine cross-links in cell wall peptidoglycan), preferring Gly-Gly-|-X substrates where X is Ala or Gly. Enhances the elastolytic but not proteolytic activity of elastase (lasB) and elastolytic activity of other proteases. Degradation of elastin is likely to contribute to the pathogenicity of P.aeruginosa. This is Protease LasA (lasA) from Pseudomonas aeruginosa (strain UCBPP-PA14).